The sequence spans 223 residues: Protein Mis18-alpha (223 aa).

Positions 1–30 are disordered; that stretch reads MAGTFSLEPCSTSSSCNHQGKRSESSLLEK. Residues 9–18 show a composition bias toward polar residues; sequence PCSTSSSCNH. Residues 21 to 30 show a composition bias toward basic and acidic residues; it reads KRSESSLLEK. 3 positions are modified to phosphoserine: Ser33, Ser36, and Ser37. Positions 71–169 constitute a Mis18 domain; that stretch reads PLVFLCTRCR…SVEAVESYTL (99 aa). Positions 76, 79, 132, and 135 each coordinate Zn(2+). Lys153 is covalently cross-linked (Glycyl lysine isopeptide (Lys-Gly) (interchain with G-Cter in SUMO2)). Ser223 carries the post-translational modification Phosphoserine.

Belongs to the mis18 family. In terms of assembly, homodimer, and heterodimer with OIP5/MIS18B. Identified in a complex containing MIS18A, OIP5/MIS18B, MIS18BP1, RBBP7 and RBBP4.

Its subcellular location is the nucleus. It is found in the chromosome. The protein localises to the centromere. In terms of biological role, required for recruitment of CENPA to centromeres and normal chromosome segregation during mitosis. The chain is Protein Mis18-alpha (Mis18a) from Rattus norvegicus (Rat).